The sequence spans 491 residues: Synaptotagmin-9 (491 aa).

Topologically, residues 1–52 (MPGARDALCHQALQLLAELCARGALEHDSCQDFIYHLRDRARPRLRDPDISV) are vesicular. The tract at residues 9–31 (CHQALQLLAELCARGALEHDSCQ) is cysteine motif. A helical membrane pass occupies residues 53 to 73 (SLLTLVVTACGLALFGVSLFV). Residues 74–491 (SWKLCWVPWR…AHWHSLLEKR (418 aa)) lie on the Cytoplasmic side of the membrane. Polar residues predominate over residues 91–104 (SKDNNQEPLNYTDT). Residues 91–147 (SKDNNQEPLNYTDTETNEQENSEDFLDPPTPCPDSSMKISHTSPDIPLSTQPGGQDN) form a disordered region. Over residues 105 to 116 (ETNEQENSEDFL) the composition is skewed to acidic residues. Polar residues predominate over residues 127–144 (MKISHTSPDIPLSTQPGG). S177 carries the phosphoserine modification. 2 consecutive C2 domains span residues 220 to 341 (ACGK…ILWK) and 352 to 485 (DLGE…AHWH). Ca(2+)-binding residues include D251, D257, D309, F310, D311, S314, D317, D383, D389, D443, and D445.

This sequence belongs to the synaptotagmin family. In terms of assembly, homodimer; disulfide-linked via the cysteine motif. Can also form heterodimers with SYT3, SYT6, SYT7 and SYT10. Requires Ca(2+) as cofactor.

It localises to the cytoplasmic vesicle. It is found in the secretory vesicle. Its subcellular location is the synaptic vesicle membrane. Functionally, may be involved in Ca(2+)-dependent exocytosis of secretory vesicles through Ca(2+) and phospholipid binding to the C2 domain or may serve as Ca(2+) sensors in the process of vesicular trafficking and exocytosis. In Rattus norvegicus (Rat), this protein is Synaptotagmin-9 (Syt9).